The chain runs to 167 residues: Epithelial membrane protein 2 (167 aa).

The chain crosses the membrane as a helical span at residues 1-21; the sequence is MLVLLAFIIAFHITSAALLFI. N-linked (GlcNAc...) asparagine glycosylation is found at Asn-44, Asn-47, and Asn-52. 3 helical membrane-spanning segments follow: residues 67 to 87, 95 to 115, and 143 to 163; these read TMILSTILCCIAFFIFVLQLF, FVLTSIIQLMSCLCVMIAASI, and YILAWVAFACTFISGMMYLIL.

This sequence belongs to the PMP-22/EMP/MP20 family. In terms of assembly, interacts with PTK2; regulates PTK2 activation and localization. Interacts with ITGB3; regulates the levels of the heterodimer ITGA5-ITGB3 integrin surface expression. Interacts with P2RX7 (via C-terminus). Interacts with ITGB1; the interaction may be direct or indirect and ITGB1 has a heterodimer form.

The protein localises to the golgi apparatus membrane. It is found in the cell membrane. Its subcellular location is the apical cell membrane. It localises to the membrane raft. The protein resides in the cytoplasm. The protein localises to the nucleus. It is found in the perinuclear region. Functionally, functions as a key regulator of cell membrane composition by regulating protein surface expression. Also, plays a role in regulation of processes including cell migration, cell proliferation, cell contraction and cell adhesion. Regulates transepithelial migration of neutrophils into the alveolar lumen, potentially via mediation of cell surface expression of adhesion markers and lipid raft formation. Negatively regulates caveolae formation by reducing CAV1 expression and CAV1 amount by increasing lysosomal degradation. Facilitates surface trafficking and the formation of lipid rafts bearing GPI-anchor proteins. Regulates surface expression of MHC1 and ICAM1 proteins increasing susceptibility to T-cell mediated cytotoxicity. Regulates the plasma membrane expression of the integrin heterodimers ITGA6-ITGB1, ITGA5-ITGB3 and ITGA5-ITGB1 resulting in modulation of cell-matrix adhesion. Also regulates many processes through PTK2. Regulates blood vessel endothelial cell migration and angiogenesis by regulating VEGF protein expression through PTK2 activation. Regulates cell migration and cell contraction through PTK2 and SRC activation. Regulates focal adhesion density, F-actin conformation and cell adhesion capacity through interaction with PTK2. Positively regulates cell proliferation. Plays a role during cell death and cell blebbing. Promotes angiogenesis and vasculogenesis through induction of VEGFA via a HIF1A-dependent pathway. Also plays a role in embryo implantation by regulating surface trafficking of integrin heterodimer ITGA5-ITGB3. Plays a role in placental angiogenesis and uterine natural killer cell regulation at the maternal-fetal placental interface, however not required in the maternal tissues for a viable pregnancy. Involved in the early stages of embryogenic development and cardiogenesis, potentially via regulation of epithelial-mesenchymal transition timing. May play a role in glomerular filtration. In Pan troglodytes (Chimpanzee), this protein is Epithelial membrane protein 2 (EMP2).